The following is a 534-amino-acid chain: BEN domain-containing protein 4 (534 aa).

Disordered regions lie at residues 1-24, 48-128, and 287-322; these read MEEE…RSPY, ELPH…AASS, and VHTL…EEGY. The segment covering 53 to 63 has biased composition (pro residues); it reads RAPPPPPPPFA. Residues 69-83 are compositionally biased toward polar residues; it reads SISSSEPPPQQFQAQ. The span at 91–109 shows a compositional bias: low complexity; it reads GRAAAAASSSSPSCTPATS. Over residues 295 to 310 the composition is skewed to polar residues; that stretch reads SPATSESHGHPSSSTL. The span at 311–321 shows a compositional bias: acidic residues; that stretch reads PEEEEEEDEEG. Residues 324-351 adopt a coiled-coil conformation; the sequence is PRCQELEQEVISLQQENEELRRKLESIP. The region spanning 390-498 is the BEN domain; sequence NYPVYITSKQ…DAVGHARQGR (109 aa).

This chain is BEN domain-containing protein 4 (BEND4), found in Homo sapiens (Human).